The chain runs to 1416 residues: Phospholipid-transporting ATPase VD (1416 aa).

The Cytoplasmic segment spans residues Met1–Arg97. A helical membrane pass occupies residues Ala98 to Phe118. Over Gln119–Lys120 the chain is Exoplasmic loop. A helical membrane pass occupies residues Glu121 to Glu141. Residues Asp142–Asp321 lie on the Cytoplasmic side of the membrane. A helical transmembrane segment spans residues Val322–Ile342. At Trp343–Pro365 the chain is on the exoplasmic loop side. The helical transmembrane segment at Val366–Ile386 threads the bilayer. The Cytoplasmic portion of the chain corresponds to Ser387–Met1110. The active-site 4-aspartylphosphate intermediate is Asp438. Positions 438, 439, and 440 each coordinate ATP. Asp438 is a Mg(2+) binding site. Residue Thr440 participates in Mg(2+) binding. The segment at Ala498–Met544 is disordered. A compositionally biased stretch (polar residues) spans Ala514 to Val523. ATP is bound by residues Glu729, Phe771, Lys795, Arg838, Thr918, Gly919, and Asp920. A disordered region spans residues Pro971–Gly990. Over residues Ser976–Gln987 the composition is skewed to polar residues. ATP is bound by residues Gly993–Thr1000, Arg1027, and Lys1033. Asp1053 provides a ligand contact to Mg(2+). 2 residues coordinate ATP: Asn1056 and Asp1057. Asp1057 is a Mg(2+) binding site. The chain crosses the membrane as a helical span at residues Ile1111–Phe1131. The Exoplasmic loop portion of the chain corresponds to Cys1132–Tyr1142. The helical transmembrane segment at Trp1143–Leu1163 threads the bilayer. Residues Glu1164 to Thr1192 are Cytoplasmic-facing. A helical transmembrane segment spans residues Phe1193–Phe1213. Residues Thr1214–Asp1221 lie on the Exoplasmic loop side of the membrane. The helical transmembrane segment at Ile1222–Val1242 threads the bilayer. The Cytoplasmic segment spans residues Ile1243–His1252. The chain crosses the membrane as a helical span at residues Met1253 to Leu1273. The Exoplasmic loop portion of the chain corresponds to Cys1274 to Lys1289. Residues His1290–Pro1310 form a helical membrane-spanning segment. The Cytoplasmic portion of the chain corresponds to Arg1311–Ser1416. The disordered stretch occupies residues Ser1358–Ser1416. Ala1361–Ser1368 provides a ligand contact to ATP. The span at Ser1392–Cys1402 shows a compositional bias: basic and acidic residues.

This sequence belongs to the cation transport ATPase (P-type) (TC 3.A.3) family. Type IV subfamily. In terms of assembly, component of a P4-ATPase flippase complex which consists of a catalytic alpha subunit ATP10A and an accessory beta subunit TMEM30A. Mg(2+) is required as a cofactor. Post-translationally, autophosphorylated at the conserved aspartate of the P-type ATPase signature sequence. As to expression, expressed at low amounts in liver, brain, testes, and kidney (at protein level). Expressed in placenta.

The protein localises to the cell membrane. It is found in the endoplasmic reticulum membrane. The catalysed reaction is ATP + H2O + phospholipidSide 1 = ADP + phosphate + phospholipidSide 2.. The enzyme catalyses a beta-D-glucosyl-(1&lt;-&gt;1')-N-acylsphing-4-enine(out) + ATP + H2O = a beta-D-glucosyl-(1&lt;-&gt;1')-N-acylsphing-4-enine(in) + ADP + phosphate + H(+). In terms of biological role, catalytic component of a P4-ATPase flippase complex, which catalyzes the hydrolysis of ATP coupled to the transport of glucosylceramide (GlcCer) from the outer to the inner leaflet of the plasma membrane. In Mus musculus (Mouse), this protein is Phospholipid-transporting ATPase VD (Atp10d).